Consider the following 302-residue polypeptide: Tyrosine--tRNA ligase 2 (302 aa).

Residue Tyr33 coordinates L-tyrosine. A 'HIGH' region motif is present at residues 38–47; sequence PTADSLHLGH. Positions 160 and 164 each coordinate L-tyrosine. The 'KMSKS' region motif lies at 220–224; that stretch reads KFGKS. Residue Lys223 coordinates ATP.

This sequence belongs to the class-I aminoacyl-tRNA synthetase family. TyrS type 1 subfamily. As to quaternary structure, homodimer.

Its subcellular location is the cytoplasm. The catalysed reaction is tRNA(Tyr) + L-tyrosine + ATP = L-tyrosyl-tRNA(Tyr) + AMP + diphosphate + H(+). In terms of biological role, catalyzes the attachment of tyrosine to tRNA(Tyr) in a two-step reaction: tyrosine is first activated by ATP to form Tyr-AMP and then transferred to the acceptor end of tRNA(Tyr). This is Tyrosine--tRNA ligase 2 (tyrS2) from Streptococcus thermophilus (strain CNRZ 1066).